Reading from the N-terminus, the 310-residue chain is Vomeronasal type-1 receptor 90 (310 aa).

Residues 1 to 20 (MRRISTLYGVVDKQAIFFSE) are Extracellular-facing. A helical membrane pass occupies residues 21-41 (VVIGISFNSILFLFHIFQFLL). Residues 42–46 (ERRLR) lie on the Cytoplasmic side of the membrane. Residues 47–67 (ITDLIISLLALIHLGMLTVMG) form a helical membrane-spanning segment. At 68 to 93 (FRAVDIFASQNVWNDIKCKSLAHLHR) the chain is on the extracellular side. Cys85 and Cys172 are disulfide-bonded. A helical membrane pass occupies residues 94 to 114 (LLRGLSLCATCLLSIFQAITL). Topologically, residues 115 to 135 (SPRSSCLAKFKYKSTQHSLCS) are cytoplasmic. The helical transmembrane segment at 136-156 (LLVLWAFYMSCGTHYSFTIVA) threads the bilayer. The Extracellular segment spans residues 157–183 (DYNFSSRSLIFVTESCIILPMDYITRH). Asn159 is a glycosylation site (N-linked (GlcNAc...) asparagine). The helical transmembrane segment at 184–204 (LFFILGIFRDVSFIGLMALSS) threads the bilayer. At 205–238 (GYMVALLCRHRKQAQHLHRTSLSPKASPEQRATR) the chain is on the cytoplasmic side. The helical transmembrane segment at 239–259 (TILLLMSFFVLMYCLDCTISA) threads the bilayer. The Extracellular segment spans residues 260–271 (SRLMHNGEPIHH). The helical transmembrane segment at 272–292 (SIQMMVSNSYATLSPLLLIVT) threads the bilayer. Residues 293–310 (ENRISRFLKSLLGRTVDA) lie on the Cytoplasmic side of the membrane.

The protein belongs to the G-protein coupled receptor 1 family. Expressed in 1-4% of neurons of the vomeronasal organ. Only one pheromone receptor gene may be expressed in a particular neuron. Not expressed in the main olfactory epithelium.

Its subcellular location is the cell membrane. Its function is as follows. Putative pheromone receptor implicated in the regulation of social as well as reproductive behavior. The polypeptide is Vomeronasal type-1 receptor 90 (Vom1r90) (Rattus norvegicus (Rat)).